The following is a 627-amino-acid chain: Pro-interleukin-16 (627 aa).

Disordered regions lie at residues 34–136 (HMPL…SIKQ), 162–267 (SSGE…LTRS), and 316–337 (GASPTSLSNEDSAANGCAETSG). Ser-217 carries the phosphoserine modification. The span at 318 to 337 (SPTSLSNEDSAANGCAETSG) shows a compositional bias: polar residues. The interval 401–497 (KQLDSIHVTI…IVTRKLTPET (97 aa)) is interaction with PPP1R12A, PPP1R12B and PPP1R12C. PDZ domains follow at residues 407–492 (HVTI…VTRK) and 529–614 (TVTL…IKRK).

Homotetramer. Pro-interleukin-16 interacts (via PDZ 2 domain) with PPP1R12A, PPP1R12B and PPP1R12C. Pro-interleukin-16 interacts with GRIN2A. Pro-interleukin-16 interacts with GABPB1. Pro-interleukin-16 interacts (via PDZ 3 domain) with HDAC3.

It localises to the secreted. Its subcellular location is the cytoplasm. It is found in the nucleus. Its function is as follows. Interleukin-16 stimulates a migratory response in CD4+ lymphocytes, monocytes, and eosinophils. Primes CD4+ T-cells for IL-2 and IL-15 responsiveness. Also induces T-lymphocyte expression of interleukin 2 receptor. Ligand for CD4. Functionally, pro-interleukin-16 is involved in cell cycle progression in T-cells. Appears to be involved in transcriptional regulation of SKP2 and is probably part of a transcriptional repression complex on the core promoter of the SKP2 gene. May act as a scaffold for GABPB1 (the DNA-binding subunit the GABP transcription factor complex) and HDAC3 thus maintaining transcriptional repression and blocking cell cycle progression in resting T-cells. The protein is Pro-interleukin-16 (IL16) of Saimiri sciureus (Common squirrel monkey).